Here is a 1459-residue protein sequence, read N- to C-terminus: PPE family protein PPE34 (1459 aa).

It belongs to the mycobacterial PPE family. As to quaternary structure, interacts with human TLR2.

Its subcellular location is the cell membrane. The protein localises to the secreted. It is found in the cell wall. It localises to the cell surface. Facilitates a shift in the ensuing immunity toward the Th2 phenotype and could aid in immune evasion by mycobacteria. Interacts with human Toll-like receptor 2 (TLR2) and triggers functional maturation of human dendritic cells (DCs), leading to secretion of IL-4, IL-5 and IL-10 from CD4(+) T cells and induction of Th2 immune response. Maturation of DCs involves PI3K, ERK1/2, p38 MAPK and NF-kappa-B signaling pathways. The chain is PPE family protein PPE34 from Mycobacterium tuberculosis (strain ATCC 25618 / H37Rv).